An 86-amino-acid chain; its full sequence is Progonadoliberin IIB (86 aa).

The first 24 residues, 1–24, serve as a signal peptide directing secretion; sequence MVHICRLFVVMGMLMFLSVQFASS. The residue at position 25 (Gln25) is a Pyrrolidone carboxylic acid. Residue Gly34 is modified to Glycine amide.

It belongs to the GnRH family. Olfactory bulbs, hypothalamus and telencephalon, midbrain and posterior brain areas.

The protein resides in the secreted. In terms of biological role, stimulates the secretion of gonadotropins. This chain is Progonadoliberin IIB (gnrh2b), found in Carassius auratus (Goldfish).